The chain runs to 329 residues: Ribosomal RNA small subunit methyltransferase C (329 aa).

This sequence belongs to the methyltransferase superfamily. RsmC family. In terms of assembly, monomer.

The protein localises to the cytoplasm. It catalyses the reaction guanosine(1207) in 16S rRNA + S-adenosyl-L-methionine = N(2)-methylguanosine(1207) in 16S rRNA + S-adenosyl-L-homocysteine + H(+). Functionally, specifically methylates the guanine in position 1207 of 16S rRNA in the 30S particle. The sequence is that of Ribosomal RNA small subunit methyltransferase C from Actinobacillus pleuropneumoniae serotype 3 (strain JL03).